Reading from the N-terminus, the 835-residue chain is Lon protease (835 aa).

Positions 4 to 224 (LPYIAIRNQL…LAINMLINAI (221 aa)) constitute a Lon N-terminal domain. 412–419 (GPPGTGKT) is an ATP binding site. The region spanning 649–832 (QPKAGVVNAL…DEIFKYIFEA (184 aa)) is the Lon proteolytic domain. Active-site residues include S738 and K781.

This sequence belongs to the peptidase S16 family. Homohexamer. Organized in a ring with a central cavity.

It is found in the cytoplasm. It carries out the reaction Hydrolysis of proteins in presence of ATP.. ATP-dependent serine protease that mediates the selective degradation of mutant and abnormal proteins as well as certain short-lived regulatory proteins. Required for cellular homeostasis and for survival from DNA damage and developmental changes induced by stress. Degrades polypeptides processively to yield small peptide fragments that are 5 to 10 amino acids long. Binds to DNA in a double-stranded, site-specific manner. The protein is Lon protease of Metamycoplasma arthritidis (strain 158L3-1) (Mycoplasma arthritidis).